The chain runs to 298 residues: Myozenin-1 (298 aa).

The disordered stretch occupies residues 1–34; sequence MPLSGTPAPNKKRKSSKLIMELTGGGQESSGLNL. Phosphoserine is present on Ser-82. The interval 105–173 is disordered; sequence FSYSKGSSGG…TGTGDQAGGE (69 aa). Residues 118–129 show a composition bias toward low complexity; that stretch reads GSSSAGQYGSGQ. Over residues 136-172 the composition is skewed to gly residues; that stretch reads SGSGSGGAGGPGSQTGRGGDAGTTGVGETGTGDQAGG.

The protein belongs to the myozenin family. As to quaternary structure, interacts with ACTN2, ACTN3, FLNA, FLNB, FLNC, LDB3, PPP3CA and TCAP. Interacts via its C-terminal region with MYOT.

The protein localises to the nucleus. The protein resides in the cell projection. Its subcellular location is the pseudopodium. Its function is as follows. Myozenins may serve as intracellular binding proteins involved in linking Z-disk proteins such as alpha-actinin, gamma-filamin, TCAP/telethonin, LDB3/ZASP and localizing calcineurin signaling to the sarcomere. Plays an important role in the modulation of calcineurin signaling. May play a role in myofibrillogenesis. This chain is Myozenin-1 (MYOZ1), found in Sus scrofa (Pig).